A 128-amino-acid chain; its full sequence is UPF0325 protein YaeH (128 aa).

This sequence belongs to the UPF0325 family.

The protein is UPF0325 protein YaeH of Shigella boydii serotype 18 (strain CDC 3083-94 / BS512).